We begin with the raw amino-acid sequence, 37 residues long: Albumin-2 (37 aa).

The Hemopexin repeat unit spans residues 6–37 (IANFSVLNXEAYLFINDKYVLLDYAPGTXNDK).

Dimer. In terms of tissue distribution, expressed in seeds (at protein level).

It localises to the cytoplasm. It is found in the cytosol. Functionally, binds hemin and thiamine. This is Albumin-2 from Lens culinaris (Lentil).